The chain runs to 500 residues: Protein DETOXIFICATION 24 (500 aa).

The segment at 1-20 (MSTQEEMEERLLREGSDAEG) is disordered. Helical transmembrane passes span 48-67 (SSLF…AFIG), 72-92 (LGLA…YGLM), 124-144 (IVDM…GPIL), 160-180 (IYPW…IQMY), 188-208 (AIVG…TWWC), 225-245 (VGSW…WCPF), 266-286 (ISSG…VLMA), 298-318 (AFSI…GFLG), 342-362 (VILT…LAFC), 384-404 (VILA…GVAV), 411-431 (IVAV…GLIL), and 441-461 (GLWS…CYII).

It belongs to the multi antimicrobial extrusion (MATE) (TC 2.A.66.1) family.

Its subcellular location is the membrane. This Arabidopsis thaliana (Mouse-ear cress) protein is Protein DETOXIFICATION 24.